Consider the following 445-residue polypeptide: Phosphoglucosamine mutase 1 (445 aa).

The active-site Phosphoserine intermediate is serine 102. Mg(2+) contacts are provided by serine 102, aspartate 241, aspartate 243, and aspartate 245. Serine 102 carries the post-translational modification Phosphoserine.

Belongs to the phosphohexose mutase family. Mg(2+) is required as a cofactor. Activated by phosphorylation.

The catalysed reaction is alpha-D-glucosamine 1-phosphate = D-glucosamine 6-phosphate. Functionally, catalyzes the conversion of glucosamine-6-phosphate to glucosamine-1-phosphate. This is Phosphoglucosamine mutase 1 from Shewanella sp. (strain MR-7).